Reading from the N-terminus, the 91-residue chain is Probable Fe(2+)-trafficking protein (91 aa).

It belongs to the Fe(2+)-trafficking protein family.

In terms of biological role, could be a mediator in iron transactions between iron acquisition and iron-requiring processes, such as synthesis and/or repair of Fe-S clusters in biosynthetic enzymes. This chain is Probable Fe(2+)-trafficking protein, found in Tolumonas auensis (strain DSM 9187 / NBRC 110442 / TA 4).